We begin with the raw amino-acid sequence, 600 residues long: Arginine--tRNA ligase (600 aa).

The 'HIGH' region signature appears at 132–142; sequence ANPTGPLHVGH.

Belongs to the class-I aminoacyl-tRNA synthetase family. As to quaternary structure, monomer.

Its subcellular location is the cytoplasm. The catalysed reaction is tRNA(Arg) + L-arginine + ATP = L-arginyl-tRNA(Arg) + AMP + diphosphate. The chain is Arginine--tRNA ligase from Ralstonia nicotianae (strain ATCC BAA-1114 / GMI1000) (Ralstonia solanacearum).